The primary structure comprises 241 residues: Probable transcriptional regulatory protein SAR11_0592 (241 aa).

A disordered region spans residues 1 to 24 (MSGHSKWASIKHSKGKADKQRSKV).

It belongs to the TACO1 family.

It localises to the cytoplasm. The protein is Probable transcriptional regulatory protein SAR11_0592 of Pelagibacter ubique (strain HTCC1062).